The sequence spans 314 residues: MIRIGTRGSLLATTQAATVRDALIANGHAAELVTISTLGDRSSAPIETLGVGVFTTALREAIEDGRVDAAVHSHKDLPTAQDPRFTIAAIPPRQDPRDAVVARDGLVLGELPVGSLVGTSSPRRAAQLRALGLGLEIRPLRGNLDTRLNRVSNGDLDAIVVARAGLARLGRLDDVTETLEPVQMLPAPAQGALAIECRAGDSRLATVLAELDDADTRAAVTAERALLAELEAGCSAPVGAIAEVVESIDEEGRVFEELSLRGCVAALDGSDVIRASGIGTSGRARELGLAVAAELFELGARELMWGEGNSPQGS.

Cysteine 234 is modified (S-(dipyrrolylmethanemethyl)cysteine).

It belongs to the HMBS family. In terms of assembly, monomer. Dipyrromethane is required as a cofactor.

The enzyme catalyses 4 porphobilinogen + H2O = hydroxymethylbilane + 4 NH4(+). Its pathway is porphyrin-containing compound metabolism; protoporphyrin-IX biosynthesis; coproporphyrinogen-III from 5-aminolevulinate: step 2/4. Its function is as follows. Tetrapolymerization of the monopyrrole PBG into the hydroxymethylbilane pre-uroporphyrinogen in several discrete steps. This is Porphobilinogen deaminase from Mycobacterium marinum (strain ATCC BAA-535 / M).